Here is a 345-residue protein sequence, read N- to C-terminus: Dihydroorotase (345 aa).

His14 and His16 together coordinate Zn(2+). Substrate contacts are provided by residues 16–18 (HLR) and Asn42. 3 residues coordinate Zn(2+): Lys102, His139, and His177. The residue at position 102 (Lys102) is an N6-carboxylysine. Residue His139 participates in substrate binding. Leu222 serves as a coordination point for substrate. Residue Asp250 coordinates Zn(2+). Asp250 is an active-site residue. His254 and Ala266 together coordinate substrate.

It belongs to the metallo-dependent hydrolases superfamily. DHOase family. Class II DHOase subfamily. Homodimer. Zn(2+) is required as a cofactor.

It carries out the reaction (S)-dihydroorotate + H2O = N-carbamoyl-L-aspartate + H(+). It participates in pyrimidine metabolism; UMP biosynthesis via de novo pathway; (S)-dihydroorotate from bicarbonate: step 3/3. Functionally, catalyzes the reversible cyclization of carbamoyl aspartate to dihydroorotate. This chain is Dihydroorotase, found in Nitrosomonas eutropha (strain DSM 101675 / C91 / Nm57).